The following is an 881-amino-acid chain: MKRSISVDSSSPKNVFNPETPNGFDDSVYLNFTSMHSIQPILSRIRELAAITIPKERVPRLCWFKQLLELQAPPEMQRNELPFSVYLISGNAGSGKSTCIQTLNEAIDCIITGSTRVAAQNVHAKLSTAYASRPINTIFHEFGFRGNHIQAQLGRYAYNWTTTPPSIEDLQKRDIVYYWEVLIDITKRVFQMGDDGRGGTSTFKTLWAIERLLNKPTGSMSGTAFIACGSLPAFTRSNVIVIDEAGLLGRHILTAVVYCWWLLNAIYQSPQYINGRKPVIVCVGSPTQTDSLESHFQHDMQRSHVTPSENILTYIICNQTLRQYTNISHNWAIFINNKRCQEDDFGNLLKTLEYGLPITEAHARLVDTFVVPASYINNPANLPGWTRLYSSHKEVSAYMSKLHAHLKLSKNDHFSVFALPTYTFIRLTAFDEYRKLTGQPGLSVEHWIRANSGRLHNYSQSRDHDMGTVKYETHSNRDLIVARTDITYVLNSLVVVTTRLRKLVIGFSGTFQSFAKVLRDDSFVKARGETSIEYAYRFLSNLIFGGLINFYNFLLNKNLHPDKVSLAYKRLAALTLELLSGTNKAPLHEAAVNGAGAGIDCDGAATSADKAFCFTKAPESKVTASIPEDPDDVIFTALNDEVIDLVYCQYEFSYPKSSNEVHAQFLLMKAIYDGRYAILAELFESSFTTAPFSAYVDNVNFNGSELLIGNVRGGLLSLALQTDTYTLLGYTFAPVPVFVEELTRKKLYRETTEMLYALHVPLMVLQDQHGFVSIVNANVCEFTESIEDAELAMATTVDYGLSSKLAMTIARSQGLSLEKVAICFTADKLRLNSVYVAMSRTVSSRFLKMNLNPLRERYEKSAEISDHILAALRDPNVHVVY.

An ATP-binding site is contributed by 90–97 (GNAGSGKS).

Belongs to the herpesviridae helicase family. In terms of assembly, associates with the primase and the primase-associated factor to form the helicase-primase complex.

It localises to the host nucleus. Functionally, component of the helicase/primase complex. Unwinds the DNA at the replication forks and generates single-stranded DNA for both leading and lagging strand synthesis. The primase synthesizes short RNA primers on the lagging strand that the polymerase elongates using dNTPs. Possesses helicase-like motifs and therefore may act as the helicase subunit of the complex. The chain is DNA replication helicase from Homo sapiens (Human).